The sequence spans 162 residues: Phosphopantetheine adenylyltransferase (162 aa).

Threonine 10 contacts substrate. ATP is bound by residues 10 to 11 and histidine 18; that span reads TF. Residues lysine 42, methionine 74, and arginine 88 each contribute to the substrate site. ATP contacts are provided by residues 89 to 91, glutamate 99, and 124 to 130; these read GLR and YAFLSST.

It belongs to the bacterial CoaD family. Homohexamer. The cofactor is Mg(2+).

The protein localises to the cytoplasm. It carries out the reaction (R)-4'-phosphopantetheine + ATP + H(+) = 3'-dephospho-CoA + diphosphate. It participates in cofactor biosynthesis; coenzyme A biosynthesis; CoA from (R)-pantothenate: step 4/5. Its function is as follows. Reversibly transfers an adenylyl group from ATP to 4'-phosphopantetheine, yielding dephospho-CoA (dPCoA) and pyrophosphate. The chain is Phosphopantetheine adenylyltransferase from Aliivibrio salmonicida (strain LFI1238) (Vibrio salmonicida (strain LFI1238)).